The sequence spans 573 residues: Adenine deaminase 2 (573 aa).

Belongs to the metallo-dependent hydrolases superfamily. Adenine deaminase family. Mn(2+) is required as a cofactor.

The enzyme catalyses adenine + H2O + H(+) = hypoxanthine + NH4(+). The sequence is that of Adenine deaminase 2 from Shouchella clausii (strain KSM-K16) (Alkalihalobacillus clausii).